Here is a 1381-residue protein sequence, read N- to C-terminus: Hepatocyte growth factor receptor (1381 aa).

A signal peptide spans 1-24; that stretch reads MKAPAVLAPGILVLLFTLVQRSNG. Residues 25-934 are Extracellular-facing; the sequence is ECKEALTKSE…VQPDQNFTGL (910 aa). Residues 27 to 515 enclose the Sema domain; sequence KEALTKSEMN…TGKKITKIPL (489 aa). Residue Asn45 is glycosylated (N-linked (GlcNAc...) asparagine). 4 disulfide bridges follow: Cys95–Cys101, Cys98–Cys160, Cys133–Cys141, and Cys172–Cys175. Asn106 carries N-linked (GlcNAc...) asparagine glycosylation. A glycan (N-linked (GlcNAc...) asparagine) is linked at Asn149. Asn202 carries N-linked (GlcNAc...) asparagine glycosylation. Intrachain disulfides connect Cys298/Cys363 and Cys385/Cys397. The N-linked (GlcNAc...) asparagine glycan is linked to Asn399. Intrachain disulfides connect Cys520-Cys538, Cys526-Cys561, Cys529-Cys545, and Cys541-Cys551. IPT/TIG domains follow at residues 563 to 655, 657 to 739, and 742 to 836; these read PTIY…FSYV, PIIT…FSYR, and PIVY…LIYV. Thr582 carries O-linked (Man) threonine glycosylation. N-linked (GlcNAc...) asparagine glycosylation is found at Asn607 and Asn635. Thr676 and Thr761 each carry an O-linked (Man) threonine glycan. Asn785, Asn879, and Asn930 each carry an N-linked (GlcNAc...) asparagine glycan. Residues 935 to 955 form a helical membrane-spanning segment; it reads VAGVVSISIALLLLLGLFLWL. The Cytoplasmic segment spans residues 956–1381; the sequence is KKKKQIKDLG…QDNTDGEVDT (426 aa). Ser966 carries the phosphoserine modification. The residue at position 977 (Thr977) is a Phosphothreonine. Ser990, Ser997, and Ser1000 each carry phosphoserine. Tyr1003 bears the Phosphotyrosine mark. The 268-residue stretch at 1078–1345 folds into the Protein kinase domain; it reads VHFNEVIGRG…RISAIFSTFI (268 aa). ATP contacts are provided by residues 1084-1092 and Lys1110; that span reads IGRGHFGCV. Catalysis depends on Asp1204, which acts as the Proton acceptor. The interval 1212 to 1381 is interaction with RANBP9; sequence LDEKFTVKVA…QDNTDGEVDT (170 aa). The residue at position 1230 (Tyr1230) is a Phosphotyrosine. A phosphotyrosine; by autocatalysis mark is found at Tyr1234 and Tyr1235. Thr1289 carries the post-translational modification Phosphothreonine. An interaction with MUC20 region spans residues 1320-1359; sequence WHPKAEMRPSFSELVSRISAIFSTFIGEHYVHVNATYVNV. Phosphotyrosine; by autocatalysis occurs at positions 1349 and 1356. At Tyr1365 the chain carries Phosphotyrosine.

Belongs to the protein kinase superfamily. Tyr protein kinase family. Heterodimer made of an alpha chain (50 kDa) and a beta chain (145 kDa) which are disulfide linked. Binds PLXNB1. Interacts when phosphorylated with downstream effectors including STAT3, PIK3R1, SRC, PCLG1, GRB2 and GAB1. Interacts with SPSB1, SPSB2 and SPSB4. Interacts with INPP5D/SHIP1. When phosphorylated at Tyr-1356, interacts with INPPL1/SHIP2. Interacts with RANBP9 and RANBP10, as well as SPSB1, SPSB2, SPSB3 and SPSB4. SPSB1 binding occurs in the presence and in the absence of HGF, however HGF treatment has a positive effect on this interaction. Interacts with MUC20; prevents interaction with GRB2 and suppresses hepatocyte growth factor-induced cell proliferation. Interacts with GRB10. Interacts with PTPN1 and PTPN2. Interacts with HSP90AA1 and HSP90AB1; the interaction suppresses MET kinase activity. Interacts with tensin TNS3. Interacts (when phosphorylated) with tensin TNS4 (via SH2 domain); the interaction increases MET protein stability by inhibiting MET endocytosis and subsequent lysosomal degradation. In terms of processing, autophosphorylated in response to ligand binding on Tyr-1234 and Tyr-1235 in the kinase domain leading to further phosphorylation of Tyr-1349 and Tyr-1356 in the C-terminal multifunctional docking site. Dephosphorylated by PTPRJ at Tyr-1349 and Tyr-1365. Dephosphorylated by PTPN1 and PTPN2. Post-translationally, ubiquitinated. Ubiquitination by CBL regulates the receptor stability and activity through proteasomal degradation. O-mannosylation of IPT/TIG domains by TMEM260 is required for protein maturation. O-mannosylated residues are composed of single mannose glycans that are not elongated or modified.

Its subcellular location is the membrane. The catalysed reaction is L-tyrosyl-[protein] + ATP = O-phospho-L-tyrosyl-[protein] + ADP + H(+). Its function is as follows. Receptor tyrosine kinase that transduces signals from the extracellular matrix into the cytoplasm by binding to hepatocyte growth factor/HGF ligand. Regulates many physiological processes including proliferation, scattering, morphogenesis and survival. Ligand binding at the cell surface induces autophosphorylation of MET on its intracellular domain that provides docking sites for downstream signaling molecules. Following activation by ligand, interacts with the PI3-kinase subunit PIK3R1, PLCG1, SRC, GRB2, STAT3 or the adapter GAB1. Recruitment of these downstream effectors by MET leads to the activation of several signaling cascades including the RAS-ERK, PI3 kinase-AKT, or PLCgamma-PKC. The RAS-ERK activation is associated with the morphogenetic effects while PI3K/AKT coordinates prosurvival effects. During embryonic development, MET signaling plays a role in gastrulation, development and migration of muscles and neuronal precursors, angiogenesis and kidney formation. In adults, participates in wound healing as well as organ regeneration and tissue remodeling. Also promotes differentiation and proliferation of hematopoietic cells. This is Hepatocyte growth factor receptor (MET) from Callithrix jacchus (White-tufted-ear marmoset).